Here is a 253-residue protein sequence, read N- to C-terminus: Homeobox protein EMX2 (253 aa).

Positions 155–214 form a DNA-binding region, homeobox; the sequence is PKRIRTAFSPSQLLRLEHAFEKNHYVVGAERKQLAHSLSLTETQVKVWFQNRRTKFKRQK. The tract at residues 213–253 is disordered; it reads QKLEEEGSDSQQKKKGTHHINRWRIATKQASPEEIDVTSDD. Over residues 225–234 the composition is skewed to basic residues; that stretch reads KKKGTHHINR.

The protein belongs to the EMX homeobox family. As to quaternary structure, interacts with translation initiation factor EIF4E.

It is found in the nucleus. The protein localises to the cell projection. The protein resides in the axon. Functionally, transcription factor, which in cooperation with EMX1, acts to generate the boundary between the roof and archipallium in the developing brain. May function in combination with OTX1/2 to specify cell fates in the developing central nervous system. In the inner ear, it controls the distribution of GPR156 at hair cell boundaries, and regulates the organization of stereociliary bundles in opposite orientations across the line of polarity reversal (LPR). This is Homeobox protein EMX2 (EMX2) from Bos taurus (Bovine).